We begin with the raw amino-acid sequence, 433 residues long: 3-phosphoshikimate 1-carboxyvinyltransferase (433 aa).

3-phosphoshikimate contacts are provided by K21, S22, and R26. K21 provides a ligand contact to phosphoenolpyruvate. Phosphoenolpyruvate is bound by residues G96 and R124. 3-phosphoshikimate contacts are provided by S167, S168, Q169, S195, D310, and K337. Position 169 (Q169) interacts with phosphoenolpyruvate. The active-site Proton acceptor is D310. Positions 341, 384, and 410 each coordinate phosphoenolpyruvate.

The protein belongs to the EPSP synthase family. Monomer.

The protein resides in the cytoplasm. The catalysed reaction is 3-phosphoshikimate + phosphoenolpyruvate = 5-O-(1-carboxyvinyl)-3-phosphoshikimate + phosphate. It functions in the pathway metabolic intermediate biosynthesis; chorismate biosynthesis; chorismate from D-erythrose 4-phosphate and phosphoenolpyruvate: step 6/7. Catalyzes the transfer of the enolpyruvyl moiety of phosphoenolpyruvate (PEP) to the 5-hydroxyl of shikimate-3-phosphate (S3P) to produce enolpyruvyl shikimate-3-phosphate and inorganic phosphate. The polypeptide is 3-phosphoshikimate 1-carboxyvinyltransferase (Clostridium botulinum (strain Eklund 17B / Type B)).